The following is a 148-amino-acid chain: Large ribosomal subunit protein bL9 (148 aa).

The protein belongs to the bacterial ribosomal protein bL9 family.

Its function is as follows. Binds to the 23S rRNA. The protein is Large ribosomal subunit protein bL9 of Bifidobacterium longum (strain DJO10A).